Reading from the N-terminus, the 212-residue chain is Methylthioribulose-1-phosphate dehydratase (212 aa).

Positions 99 and 101 each coordinate Zn(2+).

Belongs to the aldolase class II family. MtnB subfamily. In terms of assembly, homotetramer. Requires Zn(2+) as cofactor.

It catalyses the reaction 5-(methylsulfanyl)-D-ribulose 1-phosphate = 5-methylsulfanyl-2,3-dioxopentyl phosphate + H2O. The protein operates within amino-acid biosynthesis; L-methionine biosynthesis via salvage pathway; L-methionine from S-methyl-5-thio-alpha-D-ribose 1-phosphate: step 2/6. In terms of biological role, catalyzes the dehydration of methylthioribulose-1-phosphate (MTRu-1-P) into 2,3-diketo-5-methylthiopentyl-1-phosphate (DK-MTP-1-P). This Bacillus pumilus (strain SAFR-032) protein is Methylthioribulose-1-phosphate dehydratase.